The chain runs to 451 residues: Trigger factor (451 aa).

Residues 163–248 form the PPIase FKBP-type domain; the sequence is GDIIDMEYTV…IKALYVNILP (86 aa).

This sequence belongs to the FKBP-type PPIase family. Tig subfamily.

The protein resides in the cytoplasm. It catalyses the reaction [protein]-peptidylproline (omega=180) = [protein]-peptidylproline (omega=0). In terms of biological role, involved in protein export. Acts as a chaperone by maintaining the newly synthesized protein in an open conformation. Functions as a peptidyl-prolyl cis-trans isomerase. The polypeptide is Trigger factor (Leptospira borgpetersenii serovar Hardjo-bovis (strain JB197)).